The chain runs to 519 residues: Sodium-dependent dicarboxylate transporter SdcS (519 aa).

The next 14 helical transmembrane spans lie at 29–49 (VGQL…LLLF), 59–79 (VFVL…AIPI), 103–123 (AQYG…AIAM), 136–156 (IINT…IATG), 159–179 (SMFV…LAII), 201–221 (ALVL…LIGT), 241–261 (FAKW…LVWI), 297–317 (KVVL…EFLL), 322–342 (FTSE…LFLI), 362–382 (LPWG…GISE), 395–415 (LIEG…VLFL), 428–448 (ILPI…LLMV), 451–471 (AMAA…AIVF), and 490–510 (LLSI…VLGI).

It belongs to the SLC13A/DASS transporter (TC 2.A.47) family. NADC subfamily.

It localises to the cell membrane. Functionally, mediates the transport of dicarboxylates across the cytoplasmic membrane via a Na(+)-electrochemical gradient. In Staphylococcus saprophyticus subsp. saprophyticus (strain ATCC 15305 / DSM 20229 / NCIMB 8711 / NCTC 7292 / S-41), this protein is Sodium-dependent dicarboxylate transporter SdcS (sdcS).